A 522-amino-acid chain; its full sequence is Leucine-rich repeat transmembrane neuronal protein 1 (522 aa).

The first 34 residues, 1–34 (MDFLLLGLCLYWLLRRPSGVVLCLLGACFQMLPA), serve as a signal peptide directing secretion. The LRRNT domain occupies 35 to 63 (APSGCPQLCRCEGRLLYCEALNPTEAPHN). At 35 to 427 (APSGCPQLCR…HAENAVQIHK (393 aa)) the chain is on the extracellular side. Asn63 is a glycosylation site (N-linked (GlcNAc...) asparagine). LRR repeat units follow at residues 64–87 (LSGLLGLSLRYNSLSELRAGQFTG), 89–111 (MQLTWLYLDHNHICSVQGDAFQK), 112–135 (LRRVKELTLSSNQITQLPNTTFRP), 137–159 (PNLRSVDLSYNKLQALAPDLFHG), 161–183 (RKLTTLHMRANAIQFVPVRIFQD), 184–207 (CRSLKFLDIGYNQLKSLARNSFAG), 209–231 (FKLTELHLEHNDLVKVNFAHFPR), 233–255 (ISLHSLCLRRNKVAIVVSSLDWV), 256–278 (WNLKKMDLSGNEIEYMEPHVFET), and 279–302 (VPHLQSLQLDSNRLTYIEPRILNS). N-linked (GlcNAc...) asparagine glycosylation occurs at Asn130. In terms of domain architecture, LRRCT spans 314–365 (NLWDCGRNVCALASWLSNFQGRYDGNLQCASPEYAQGEDVLDAVYAFHLCED). N-linked (GlcNAc...) asparagine glycosylation occurs at Asn380. Positions 382-401 (SDLGPPASSATTLADGGEGQ) are disordered. The helical transmembrane segment at 428–448 (VVTGTMALIFSFLIVVLVLYV) threads the bilayer. The Cytoplasmic segment spans residues 449–522 (SWKCFPASLR…HQQPARECEV (74 aa)).

The protein belongs to the LRRTM family.

It localises to the cell membrane. The protein resides in the postsynaptic cell membrane. Exhibits strong synaptogenic activity, restricted to excitatory presynaptic differentiation, acting at both pre- and postsynaptic level. The sequence is that of Leucine-rich repeat transmembrane neuronal protein 1 (LRRTM1) from Pongo abelii (Sumatran orangutan).